Reading from the N-terminus, the 315-residue chain is Type II restriction enzyme SalI (315 aa).

The catalysed reaction is Endonucleolytic cleavage of DNA to give specific double-stranded fragments with terminal 5'-phosphates.. Functionally, a P subtype restriction enzyme that recognizes the double-stranded sequence 5'-GTCGAC-3' and cleaves after G-1. This Streptomyces albus G protein is Type II restriction enzyme SalI.